The primary structure comprises 450 residues: UDP-N-acetylmuramoylalanine--D-glutamate ligase (450 aa).

119-125 lines the ATP pocket; sequence GSNGKTT.

It belongs to the MurCDEF family.

It localises to the cytoplasm. It catalyses the reaction UDP-N-acetyl-alpha-D-muramoyl-L-alanine + D-glutamate + ATP = UDP-N-acetyl-alpha-D-muramoyl-L-alanyl-D-glutamate + ADP + phosphate + H(+). It functions in the pathway cell wall biogenesis; peptidoglycan biosynthesis. Functionally, cell wall formation. Catalyzes the addition of glutamate to the nucleotide precursor UDP-N-acetylmuramoyl-L-alanine (UMA). This Bacillus cereus (strain B4264) protein is UDP-N-acetylmuramoylalanine--D-glutamate ligase.